A 692-amino-acid chain; its full sequence is Ino eighty subunit 1 (692 aa).

A compositionally biased stretch (basic and acidic residues) spans 1-25 (MGKRVYDPIHDTFQLREDNSDETKA). The interval 1–133 (MGKRVYDPIH…RHLKKPDGEP (133 aa)) is disordered. Residue S27 is modified to Phosphoserine. The segment covering 28-56 (PMQSVKSGSQEEASPSSIQSETETVTTKS) has biased composition (polar residues). A compositionally biased stretch (acidic residues) spans 64–80 (EIDDKNDDDSTQSEEEN). Residues 97–109 (GASTATGPVTTNT) are compositionally biased toward polar residues. Residues 340–385 (SKYVEVESKAQEQDMVDEQNEVKETEAENEKQESKAAYATTLFDIL) adopt a coiled-coil conformation. A compositionally biased stretch (basic and acidic residues) spans 465–485 (FMSKMEEGRKRERTNVTEVKK). The segment at 465 to 550 (FMSKMEEGRK…VTPAAPTETE (86 aa)) is disordered. Phosphoserine is present on residues S487, S493, and S504. The segment covering 493-504 (SEEDGEGEDDKS) has biased composition (acidic residues). At T507 the chain carries Phosphothreonine. The segment covering 513 to 528 (SLLTPTPILESSSPMT) has biased composition (polar residues).

As to quaternary structure, component of the chromatin-remodeling INO80 complex, at least composed of ARP4, ARP5, ARP8, RVB1, RVB2, TAF14, NHP10, IES1, IES3, IES4, IES6, ACT1, IES2, IES5 and INO80.

The protein resides in the nucleus. Its function is as follows. Probably involved in transcription regulation via its interaction with the INO80 complex, a chromatin-remodeling complex. The sequence is that of Ino eighty subunit 1 (IES1) from Saccharomyces cerevisiae (strain ATCC 204508 / S288c) (Baker's yeast).